The chain runs to 153 residues: D-aminoacyl-tRNA deacylase (153 aa).

The short motif at 137–138 (GP) is the Gly-cisPro motif, important for rejection of L-amino acids element.

This sequence belongs to the DTD family. In terms of assembly, homodimer.

The protein resides in the cytoplasm. The catalysed reaction is glycyl-tRNA(Ala) + H2O = tRNA(Ala) + glycine + H(+). The enzyme catalyses a D-aminoacyl-tRNA + H2O = a tRNA + a D-alpha-amino acid + H(+). An aminoacyl-tRNA editing enzyme that deacylates mischarged D-aminoacyl-tRNAs. Also deacylates mischarged glycyl-tRNA(Ala), protecting cells against glycine mischarging by AlaRS. Acts via tRNA-based rather than protein-based catalysis; rejects L-amino acids rather than detecting D-amino acids in the active site. By recycling D-aminoacyl-tRNA to D-amino acids and free tRNA molecules, this enzyme counteracts the toxicity associated with the formation of D-aminoacyl-tRNA entities in vivo and helps enforce protein L-homochirality. This is D-aminoacyl-tRNA deacylase from Herpetosiphon aurantiacus (strain ATCC 23779 / DSM 785 / 114-95).